Here is a 112-residue protein sequence, read N- to C-terminus: ATP synthase subunit c (112 aa).

2 helical membrane-spanning segments follow: residues 36-56 (FSVLAAGLGLGVAALGGAIGM) and 81-101 (MFIALAMIEAQVIYALVIALI).

The protein belongs to the ATPase C chain family. As to quaternary structure, F-type ATPases have 2 components, F(1) - the catalytic core - and F(0) - the membrane proton channel. F(1) has five subunits: alpha(3), beta(3), gamma(1), delta(1), epsilon(1). F(0) has three main subunits: a(1), b(2) and c(10-14). The alpha and beta chains form an alternating ring which encloses part of the gamma chain. F(1) is attached to F(0) by a central stalk formed by the gamma and epsilon chains, while a peripheral stalk is formed by the delta and b chains.

The protein localises to the cell inner membrane. Its function is as follows. F(1)F(0) ATP synthase produces ATP from ADP in the presence of a proton or sodium gradient. F-type ATPases consist of two structural domains, F(1) containing the extramembraneous catalytic core and F(0) containing the membrane proton channel, linked together by a central stalk and a peripheral stalk. During catalysis, ATP synthesis in the catalytic domain of F(1) is coupled via a rotary mechanism of the central stalk subunits to proton translocation. Functionally, key component of the F(0) channel; it plays a direct role in translocation across the membrane. A homomeric c-ring of between 10-14 subunits forms the central stalk rotor element with the F(1) delta and epsilon subunits. This chain is ATP synthase subunit c, found in Campylobacter jejuni subsp. jejuni serotype O:6 (strain 81116 / NCTC 11828).